Reading from the N-terminus, the 513-residue chain is ATP synthase subunit alpha (513 aa).

Residue 169–176 participates in ATP binding; it reads GDRQTGKT.

Belongs to the ATPase alpha/beta chains family. F-type ATPases have 2 components, CF(1) - the catalytic core - and CF(0) - the membrane proton channel. CF(1) has five subunits: alpha(3), beta(3), gamma(1), delta(1), epsilon(1). CF(0) has three main subunits: a(1), b(2) and c(9-12). The alpha and beta chains form an alternating ring which encloses part of the gamma chain. CF(1) is attached to CF(0) by a central stalk formed by the gamma and epsilon chains, while a peripheral stalk is formed by the delta and b chains.

The protein resides in the cell inner membrane. It carries out the reaction ATP + H2O + 4 H(+)(in) = ADP + phosphate + 5 H(+)(out). Functionally, produces ATP from ADP in the presence of a proton gradient across the membrane. The alpha chain is a regulatory subunit. The chain is ATP synthase subunit alpha from Glaesserella parasuis serovar 5 (strain SH0165) (Haemophilus parasuis).